A 276-amino-acid chain; its full sequence is MHPAAEHSPLGKSSEYIATYTPSLLFPIPRAAKWAELGLTAQTLPYKGVDFWNCYELSWLLPSGKPVVAIAEFSIPADSPNIIESKSFKLYLNSLNQTAFDGAARVQATLEKDLSAAAGKLVGVRIRNLAEIEEEGVAVLPGVCIDELDITVSSYDQPQPELLRCDDSQVIEEAVHSHLLKSNCPVTSQPDWGSVVVEYRGAALDHASLLAYIVSFRQHSDFHEQCVERIFLDLQRLLKPEKLTVYARYVRRGGLDINPYRSTEVLDVDNRRLARQ.

Position 83 to 85 (83 to 85) interacts with substrate; sequence IES. 85 to 86 is a binding site for NADPH; it reads SK. Catalysis depends on C184, which acts as the Thioimide intermediate. D191 (proton donor) is an active-site residue. 223–224 contributes to the substrate binding site; that stretch reads HE. Residue 252–253 coordinates NADPH; it reads RG.

Belongs to the GTP cyclohydrolase I family. QueF type 2 subfamily. As to quaternary structure, homodimer.

It is found in the cytoplasm. The enzyme catalyses 7-aminomethyl-7-carbaguanine + 2 NADP(+) = 7-cyano-7-deazaguanine + 2 NADPH + 3 H(+). It participates in tRNA modification; tRNA-queuosine biosynthesis. In terms of biological role, catalyzes the NADPH-dependent reduction of 7-cyano-7-deazaguanine (preQ0) to 7-aminomethyl-7-deazaguanine (preQ1). The sequence is that of NADPH-dependent 7-cyano-7-deazaguanine reductase from Pseudomonas syringae pv. tomato (strain ATCC BAA-871 / DC3000).